The primary structure comprises 130 residues: MSMQDPIADMLTRIRNGQAANKVSVKMPSAKLKVAIAKLLKEEGYIADYAVADEAKPELEITLKYFQGQPVVETIQRVSRPGLRIYKGKNELPKVMGGLGVAIVSTSKGLMTDRAARLAGMGGEVICYVA.

The protein belongs to the universal ribosomal protein uS8 family. Part of the 30S ribosomal subunit. Contacts proteins S5 and S12.

Functionally, one of the primary rRNA binding proteins, it binds directly to 16S rRNA central domain where it helps coordinate assembly of the platform of the 30S subunit. This chain is Small ribosomal subunit protein uS8, found in Shewanella sp. (strain MR-7).